Here is a 121-residue protein sequence, read N- to C-terminus: MIQSQTLLNVADNSGARKLMCIRIVGASNQRYAHIGDVIVAVIKEAKPTSALKRSEVIKAVIVRTCKEFKCDDGMIIRYDDNAAVVINKDRNPVGTRIFGAIPLELHQNFDKIVSLAREVI.

This sequence belongs to the universal ribosomal protein uL14 family. Part of the 50S ribosomal subunit.

The protein localises to the plastid. Its subcellular location is the chloroplast. In terms of biological role, binds to 23S rRNA. The polypeptide is Large ribosomal subunit protein uL14c (Pelargonium hortorum (Common geranium)).